Consider the following 145-residue polypeptide: MSGLAASWSLKPLGPHGVTQALCAVLLAVLVTMNVVLGDTLLDIPSQSPPLNQYLHCYRCLLETEELGCLLGSDTCLTPLGSTCVTLHIKNSSGFNVMVSDCRNKEQMVDCSYTRASPVFGFWIFYQCCFLDFCNNPKNRKNTMH.

The first 38 residues, 1–38 (MSGLAASWSLKPLGPHGVTQALCAVLLAVLVTMNVVLG), serve as a signal peptide directing secretion. A UPAR/Ly6 domain is found at 55–145 (LHCYRCLLET…NPKNRKNTMH (91 aa)). 5 cysteine pairs are disulfide-bonded: cysteine 57–cysteine 84, cysteine 60–cysteine 69, cysteine 76–cysteine 102, cysteine 111–cysteine 128, and cysteine 129–cysteine 134. N-linked (GlcNAc...) asparagine glycosylation is present at asparagine 91.

In terms of assembly, forms oligomers. Post-translationally, N-glycosylated. As to expression, expression restricted to the caput of epididymis. Detected only from day 24 postnatum.

The protein localises to the secreted. In terms of biological role, may have a role in hematopoietic cell differentiation. The protein is Lymphocyte antigen 6 complex locus protein G5c (Ly6g5c) of Rattus norvegicus (Rat).